A 247-amino-acid chain; its full sequence is Inhibitory synaptic factor 1 (247 aa).

A coiled-coil region spans residues 30-65 (RAVIGQLEGILRDLKEVAKELKEVVEQIDRLTSDFE). 3 disordered regions span residues 69–90 (DTDD…GGPL), 112–166 (ASTP…RDRV), and 180–217 (DDSE…GVRK). Residues 76-85 (GTVSSTSSSE) show a composition bias toward polar residues.

It belongs to the INSYN1 family.

Its subcellular location is the postsynaptic density. Functionally, may be a component of the protein machinery at the inhibitory synapses, probably acting as a scaffold. The protein is Inhibitory synaptic factor 1 of Xenopus laevis (African clawed frog).